The chain runs to 304 residues: Recombination-associated protein RdgC (304 aa).

Belongs to the RdgC family.

It localises to the cytoplasm. The protein localises to the nucleoid. Functionally, may be involved in recombination. The sequence is that of Recombination-associated protein RdgC from Shewanella sp. (strain MR-4).